The chain runs to 7067 residues: Replicase polyprotein 1ab (7067 aa).

Positions 12–127 (THVQLSLPVL…YRNVLLRKNG (116 aa)) constitute a CoV Nsp1 globular domain. The BetaCoV Nsp1 C-terminal domain occupies 148-179 (ELGTDPIEDYEQNWNTKHGSGALRELTRELNG). Positions 183–456 (TRYVDNNFCG…NEDLLEILNR (274 aa)) constitute a CoV Nsp2 N-terminal domain. Residues Cys200, Cys231, His234, His236, Cys323, Cys326, Cys341, Cys344, Cys370, Cys373, His382, and Cys416 each contribute to the Zn(2+) site. Residues 200-236 (CIKDFLARAGKSMCTLSEQLDYIESKRGVYCCREHEH) are C2H2. Positions 323–344 (CNHCDEVSWQTCDFLKATCEQC) are C4. Residues 370–416 (CPACQDPEVGPEHSVADYHNHSNIETRLRKGGRTKCFGGCVFSYVGC) form a C2HC region. The CoV Nsp2 middle domain occupies 458 to 688 (RVNINIVGDF…LGVVNKALEM (231 aa)). The CoV Nsp2 C-terminal domain maps to 690–818 (LDQVTIAGTK…TNNVFRLKGG (129 aa)). One can recognise a Ubiquitin-like 1 domain in the interval 822 to 930 (KGVTFGEDTV…MYCSFYPPDE (109 aa)). 3 consecutive Macro domains span residues 998–1164 (VNQF…LDYL), 1201–1329 (KIKA…LPSE), and 1337–1464 (VLGT…TSSS). The DPUP domain occupies 1466–1532 (TPEEYFVETT…PLDKLKSLLS (67 aa)). The 56-residue stretch at 1536-1591 (VKTIKVFTTVDNTNLHTHIVDMSMTYGQQFGPTYLDGADVTKIKPHVNHEGKTFFV) folds into the Ubiquitin-like 2 domain. Residues 1605-1869 (YYHTIDESFL…YTEIEPKLDG (265 aa)) enclose the Peptidase C16 domain. Cys1645 acts as the For PL-PRO activity in catalysis. Zn(2+) contacts are provided by Cys1723, Cys1726, Cys1758, and Cys1760. Residues 1723 to 1760 (CKHCGQKTTTLKGVEAVMYMGTLSYDELKTGVSIPCVC) form a C4-type zinc finger. Active-site for PL-PRO activity residues include His1806 and Asp1820. Positions 1882 to 1992 (PIDLVPTQPM…CLWSTKPVDT (111 aa)) constitute a Nucleic acid-binding domain. The 110-residue stretch at 2017–2126 (TTSEEVVENP…LGQTAVITSN (110 aa)) folds into the G2M domain. Residues 2086–2365 (LALGLKTLAT…IFFASFYYVW (280 aa)) form an HD1 region. The chain crosses the membrane as a helical span at residues 2197–2217 (LFTIVMWLLLLSICLGSLTYV). The 3Ecto domain occupies 2218 to 2288 (TAVLGVCLSS…QVTISSYKLD (71 aa)). 2 disulfide bridges follow: Cys2234/Cys2262 and Cys2253/Cys2259. 2 consecutive transmembrane segments (helical) span residues 2298-2318 (WLLA…SAIM) and 2345-2365 (MAPV…YYVW). The interval 2366 to 2456 (KSYVHIMDGC…QFKRPINPTD (91 aa)) is Y1. One can recognise a CoV Nsp3 Y domain in the interval 2366–2734 (KSYVHIMDGC…ITTKISLKGG (369 aa)). Residues His2370, Cys2375, Cys2380, Cys2383, Cys2416, His2419, Cys2423, and Cys2426 each coordinate Zn(2+). The interval 2370–2383 (HIMDGCTSSTCMMC) is ZF1. The segment at 2416–2426 (CKAHNWNCLNC) is ZF2. Residues 2457–2551 (QSAYVVDSVT…LLDQALVSDV (95 aa)) form a Y2 region. The segment at 2457–2734 (QSAYVVDSVT…ITTKISLKGG (278 aa)) is coV-Y. The segment at 2552 to 2633 (GDSTEVSVKM…ECLKLSHHSD (82 aa)) is Y3. Residues 2634–2734 (IEVTGDSCNN…ITTKISLKGG (101 aa)) are Y4. 7 consecutive transmembrane segments (helical) span residues 2744 to 2764 (LLKV…IMPV), 2986 to 3006 (PGVF…TPLV), 3016 to 3036 (ASVV…YYFM), 3048 to 3068 (VVAA…LAPA), 3071 to 3091 (FLPG…TNDV), 3099 to 3119 (WFAM…VFCI), and 3136 to 3156 (VMFN…TFLL). The segment at 2749 to 3156 (LLCVLAALFC…EEAALCTFLL (408 aa)) is HD2. Residues 3136 to 3234 (VMFNGVTFST…QTSITSAVLQ (99 aa)) enclose the Nsp4C domain. In terms of domain architecture, Peptidase C30 spans 3235-3540 (SGFRKMAFPS…VRQCSGVTFQ (306 aa)). Active-site for 3CL-PRO activity residues include His3275 and Cys3379. The next 7 helical transmembrane spans lie at 3558–3578 (FLTS…FFVY), 3580–3600 (NAFL…MLLV), 3606–3626 (FLCL…MVYM), 3652–3672 (DCVM…RTVY), 3679–3698 (VWTL…GNSL), 3722–3742 (IMFL…LLFI), and 3750–3770 (IMLV…LFCL). The tract at residues 3558–3770 (FLTSLLILVQ…CCCYFGLFCL (213 aa)) is HD3. One can recognise a RdRp Nsp7 cofactor domain in the interval 3831–3913 (SKMSDVKCTS…EMLDNRATLQ (83 aa)). Positions 3914-4111 (AIASEFSSLP…LRANSAVKLQ (198 aa)) constitute a RdRp Nsp8 cofactor domain. Positions 4112 to 4224 (NNELSPVALR…GSLAATVRLQ (113 aa)) constitute a Nsp9 ssRNA-binding domain. The ExoN/MTase coactivator domain occupies 4225 to 4363 (AGNATEVPAN…CDQLREPMMQ (139 aa)). Residues Cys4298, Cys4301, His4307, Cys4314, Cys4341, Cys4344, Cys4352, and Cys4354 each coordinate Zn(2+). 2 zinc fingers span residues 4298–4314 (CLYC…KGFC) and 4341–4354 (CTVC…GCSC). Positions 4370-4624 (FLNRVCGVSA…AAESHMDADL (255 aa)) constitute a NiRAN domain. Asn4572 and Asp4581 together coordinate Mn(2+). The region spanning 4629–4727 (VKWDLLKYDF…HNQDVNLHSS (99 aa)) is the Nsp12 Interface domain. Zn(2+)-binding residues include His4658, Cys4664, Cys4669, Cys4673, and Cys4850. The region spanning 4728–5295 (RLSFKELLVY…AMYTPHTVLQ (568 aa)) is the Nsp12 RNA-dependent RNA polymerase domain. The interval 4730–4944 (SFKELLVYAA…HQKLLKSIAA (215 aa)) is rdRp Fingers N-ter. The tract at residues 4945-4983 (TRGATVVIGTSKFYGGWHNMLKTVYSDVESPHLMGWDYP) is rdRp Palm N-ter. Residues 4975–5137 (PHLMGWDYPK…CYNSNYAAQG (163 aa)) enclose the RdRp catalytic domain. The tract at residues 4984–5042 (KCDRAMPNMLRIMASLILARKHSTCCNLSHRFYRLANECAQVLSEMVMCGGSLYVKPGG) is rdRp Fingers C-ter. Residues His5005, Cys5008, and Cys5009 each contribute to the Zn(2+) site. The interval 5043–5178 (TSSGDATTAY…TRGPHEFCSQ (136 aa)) is rdRp Palm C-ter. Residues Ser5122, Asp5123, and Asp5124 contribute to the active site. The segment at 5179–5295 (HTMLVKQGDD…AMYTPHTVLQ (117 aa)) is rdRp Thumb. Residues 5296–5408 (AVGACVLCNS…TDFNAIATCD (113 aa)) enclose the CV ZBD domain. Zn(2+) contacts are provided by Cys5300, Cys5303, Cys5311, Cys5314, Cys5321, Cys5324, His5328, His5334, Cys5345, Cys5350, Cys5367, and His5370. The (+)RNA virus helicase ATP-binding domain occupies 5552–5733 (NISNEFSSNV…MKTIGPDMFL (182 aa)). ATP is bound at residue 5577–5584 (GPPGTGKS). Positions 5734–5903 (GTCRRCPAEI…TLQAENVTGL (170 aa)) constitute a (+)RNA virus helicase C-terminal domain. The region spanning 5968 to 6183 (MFITREEAIR…RCLAVHECFV (216 aa)) is the ExoN domain. Catalysis depends on residues Asp5986, Glu5988, and Glu6087. Residues Cys6103, Cys6106, Cys6122, His6125, His6153, Cys6157, and His6160 each coordinate Zn(2+). Active-site residues include His6164 and Asp6169. Position 6175 (Cys6175) interacts with Zn(2+). Residues 6192 to 6423 (YPIIGDELKI…NLWNTFTKLQ (232 aa)) enclose the N7-MTase domain. Residue 6227–6233 (DIGNPKA) participates in S-adenosyl-L-methionine binding. Positions 6310-6324 (CDGGSLYVNKHAFHT) are gpppA-binding. Zn(2+) contacts are provided by Cys6348, Cys6369, Cys6380, and His6383. In terms of domain architecture, Nsp15 N-terminal oligomerization spans 6424–6484 (SLENVAYNVV…NVAFELWAKR (61 aa)). The AV-Nsp11N/CoV-Nsp15M domain occupies 6485–6610 (NIKPVPEIKI…YFKKVDGIIQ (126 aa)). The 140-residue stretch at 6627-6766 (KPRSQMETDF…KDGHVETFYP (140 aa)) folds into the NendoU domain. Active-site residues include His6657, His6672, Lys6712, Lys6815, Asp6899, Lys6939, and Glu6972. In terms of domain architecture, Nidovirus-type SAM-dependent 2'-O-MTase spans 6771–7065 (SQAWQPGVAM…RVVVSSDILV (295 aa)).

Belongs to the coronaviruses polyprotein 1ab family. As to quaternary structure, interacts with host PHB and PHB2. Interacts with papain-like protease nsp3 and non-structural protein 6. In terms of assembly, monomer. Homodimer. Only the homodimer shows catalytic activity. As to quaternary structure, interacts with nsp8 and nsp12 to form the replication-transcription complex (RTC): nsp12, nsp7, two subunits of nsp8, and up to two subunits of nsp13. Interacts with nsp7, nsp13 and nsp12 to form the replication-transcription complex (RTC): nsp12, nsp7, two subunits of nsp8, and up to two subunits of nsp13. In terms of assembly, interacts with nsp12. As to quaternary structure, interacts with proofreading exoribonuclease nsp14 and 2'-O-methyltransferase nsp16; these interactions enhance nsp14 and nsp16 enzymatic activities. Interacts with nsp7 and nsp8 to form the replication-transcription complex (RTC): nsp12, nsp7, two subunits of nsp8, and up to two subunits of nsp13. Interacts with nsp9. In terms of assembly, interacts with nsp8 to form the replication-transcription complex (RTC): nsp12, nsp7, two subunits of nsp8, and up to two subunits of nsp13. It depends on Mn(2+) as a cofactor. Requires Mg(2+) as cofactor. Specific enzymatic cleavages in vivo by its own proteases yield mature proteins. 3CL-PRO and PL-PRO proteinases are autocatalytically processed.

It is found in the host membrane. Its subcellular location is the host cytoplasm. The protein localises to the host perinuclear region. The protein resides in the host endoplasmic reticulum-Golgi intermediate compartment. The enzyme catalyses RNA(n) + a ribonucleoside 5'-triphosphate = RNA(n+1) + diphosphate. It carries out the reaction ATP + H2O = ADP + phosphate + H(+). The catalysed reaction is Thiol-dependent hydrolysis of ester, thioester, amide, peptide and isopeptide bonds formed by the C-terminal Gly of ubiquitin (a 76-residue protein attached to proteins as an intracellular targeting signal).. It catalyses the reaction a 5'-end (N(7)-methyl 5'-triphosphoguanosine)-ribonucleoside in mRNA + S-adenosyl-L-methionine = a 5'-end (N(7)-methyl 5'-triphosphoguanosine)-(2'-O-methyl-ribonucleoside) in mRNA + S-adenosyl-L-homocysteine + H(+). The enzyme catalyses uridylyl-uridylyl-ribonucleotide-RNA = a 3'-end uridylyl-2',3'-cyclophospho-uridine-RNA + a 5'-end dephospho-ribonucleoside-RNA. It carries out the reaction a 5'-end diphospho-ribonucleoside in mRNA + GTP + H(+) = a 5'-end (5'-triphosphoguanosine)-ribonucleoside in mRNA + diphosphate. The catalysed reaction is a 5'-end (5'-triphosphoguanosine)-ribonucleoside in mRNA + S-adenosyl-L-methionine = a 5'-end (N(7)-methyl 5'-triphosphoguanosine)-ribonucleoside in mRNA + S-adenosyl-L-homocysteine. In terms of biological role, the replicase polyprotein of coronaviruses is a multifunctional protein: it contains the activities necessary for the transcription of negative stranded RNA, leader RNA, subgenomic mRNAs and progeny virion RNA as well as proteinases responsible for the cleavage of the polyprotein into functional products. Functionally, inhibits host translation by interacting with the 40S ribosomal subunit. The nsp1-40S ribosome complex further induces an endonucleolytic cleavage near the 5'UTR of host mRNAs, targeting them for degradation. Viral mRNAs are not susceptible to nsp1-mediated endonucleolytic RNA cleavage thanks to the presence of a 5'-end leader sequence and are therefore protected from degradation. By suppressing host gene expression, nsp1 facilitates efficient viral gene expression in infected cells and evasion from host immune response. Its function is as follows. May play a role in the modulation of host cell survival signaling pathway by interacting with host PHB and PHB2. Indeed, these two proteins play a role in maintaining the functional integrity of the mitochondria and protecting cells from various stresses. Responsible for the cleavages located at the N-terminus of the replicase polyprotein. In addition, PL-PRO possesses a deubiquitinating/deISGylating activity and processes both 'Lys-48'- and 'Lys-63'-linked polyubiquitin chains from cellular substrates. Participates together with nsp4 in the assembly of virally-induced cytoplasmic double-membrane vesicles necessary for viral replication. Antagonizes innate immune induction of type I interferon by blocking the phosphorylation, dimerization and subsequent nuclear translocation of host IRF3. Also prevents host NF-kappa-B signaling. In terms of biological role, participates in the assembly of virally-induced cytoplasmic double-membrane vesicles necessary for viral replication. Functionally, cleaves the C-terminus of replicase polyprotein at 11 sites. Recognizes substrates containing the core sequence [ILMVF]-Q-|-[SGACN]. Also able to bind an ADP-ribose-1''-phosphate (ADRP). Its function is as follows. Plays a role in the initial induction of autophagosomes from host endoplasmic reticulum. Later, limits the expansion of these phagosomes that are no longer able to deliver viral components to lysosomes. Forms a hexadecamer with nsp8 (8 subunits of each) that may participate in viral replication by acting as a primase. Alternatively, may synthesize substantially longer products than oligonucleotide primers. In terms of biological role, forms a hexadecamer with nsp7 (8 subunits of each) that may participate in viral replication by acting as a primase. Alternatively, may synthesize substantially longer products than oligonucleotide primers. Functionally, forms a primer, NSP9-pU, which is utilized by the polymerase for the initiation of RNA chains. Interacts with ribosome signal recognition particle RNA (SRP). Together with NSP8, suppress protein integration into the cell membrane, thereby disrupting host immune defenses. Its function is as follows. Plays a pivotal role in viral transcription by stimulating both nsp14 3'-5' exoribonuclease and nsp16 2'-O-methyltransferase activities. Therefore plays an essential role in viral mRNAs cap methylation. RNA-directed RNA polymerase that catalyzes the transcription of viral genomic and subgenomic RNAs. Acts in complex with nsp7 and nsp8 to transcribe both the minus and positive strands of genomic RNA. The kinase-like NiRAN domain of NSP12 attaches one or more nucleotides to the amino terminus of NSP9, forming a covalent RNA-protein intermediate that serves as transcription/replication primer. Subgenomic RNAs (sgRNAs) are formed by discontinuous transcription: The polymerase has the ability to pause at transcription-regulating sequences (TRS) and jump to the leader TRS, resulting in a major deletion. This creates a series of subgenomic RNAs that are replicated, transcribed and translated. In addition, Nsp12 is a subunit of the viral RNA capping enzyme that catalyzes the RNA guanylyltransferase reaction for genomic and sub-genomic RNAs. Subsequently, the NiRAN domain transfers RNA to GDP, and forms the core cap structure GpppA-RNA. In terms of biological role, multi-functional protein with a zinc-binding domain in N-terminus displaying RNA and DNA duplex-unwinding activities with 5' to 3' polarity. Activity of helicase is dependent on magnesium. Functionally, plays a role in viral RNA synthesis through two distinct activities. The N7-guanine methyltransferase activity plays a role in the formation of the cap structure GpppA-RNA. The proofreading exoribonuclease reduces the sensitivity of the virus to RNA mutagens during replication. This activity acts on both ssRNA and dsRNA in a 3'-5' direction. Its function is as follows. Plays a role in viral transcription/replication and prevents the simultaneous activation of host cell dsRNA sensors, such as MDA5/IFIH1, OAS, and PKR. Acts by degrading the 5'-polyuridines generated during replication of the poly(A) region of viral genomic and subgenomic RNAs. Catalyzes a two-step reaction in which a 2'3'-cyclic phosphate (2'3'-cP) is first generated by 2'-O transesterification, which is then hydrolyzed to a 3'-phosphate (3'-P). If not degraded, poly(U) RNA would hybridize with poly(A) RNA tails and activate host dsRNA sensors. Methyltransferase that mediates mRNA cap 2'-O-ribose methylation to the 5'-cap structure of viral mRNAs. N7-methyl guanosine cap is a prerequisite for binding of nsp16. Therefore plays an essential role in viral mRNAs cap methylation which is essential to evade immune system. This chain is Replicase polyprotein 1ab (rep), found in Bat coronavirus HKU3 (BtCoV).